Reading from the N-terminus, the 132-residue chain is Mediator of RNA polymerase II transcription subunit 11 (132 aa).

It belongs to the Mediator complex subunit 11 family. In terms of assembly, component of the Mediator complex.

It is found in the nucleus. Its function is as follows. Component of the Mediator complex, a coactivator involved in the regulated transcription of nearly all RNA polymerase II-dependent genes. Mediator functions as a bridge to convey information from gene-specific regulatory proteins to the basal RNA polymerase II transcription machinery. Mediator is recruited to promoters by direct interactions with regulatory proteins and serves as a scaffold for theQ9P086 assembly of a functional pre-initiation complex with RNA polymerase II and the general transcription factors. In Aedes aegypti (Yellowfever mosquito), this protein is Mediator of RNA polymerase II transcription subunit 11 (MED11).